A 139-amino-acid chain; its full sequence is Aspartate 1-decarboxylase (139 aa).

Residue serine 25 is the Schiff-base intermediate with substrate; via pyruvic acid of the active site. The residue at position 25 (serine 25) is a Pyruvic acid (Ser). Threonine 57 provides a ligand contact to substrate. Tyrosine 58 acts as the Proton donor in catalysis. 73–75 (GAA) serves as a coordination point for substrate. The tract at residues 116-139 (ELGSDPAHAPEGSGLTSPRSLTFA) is disordered. Over residues 129–139 (GLTSPRSLTFA) the composition is skewed to polar residues.

This sequence belongs to the PanD family. In terms of assembly, heterooctamer of four alpha and four beta subunits. Pyruvate serves as cofactor. In terms of processing, is synthesized initially as an inactive proenzyme, which is activated by self-cleavage at a specific serine bond to produce a beta-subunit with a hydroxyl group at its C-terminus and an alpha-subunit with a pyruvoyl group at its N-terminus.

The protein resides in the cytoplasm. The enzyme catalyses L-aspartate + H(+) = beta-alanine + CO2. Its pathway is cofactor biosynthesis; (R)-pantothenate biosynthesis; beta-alanine from L-aspartate: step 1/1. Functionally, catalyzes the pyruvoyl-dependent decarboxylation of aspartate to produce beta-alanine. The chain is Aspartate 1-decarboxylase from Nocardia farcinica (strain IFM 10152).